The sequence spans 369 residues: Phosphoribosyl pyrophosphate synthase-associated protein 2 (369 aa).

N-acetylmethionine is present on methionine 1. 3 positions are modified to phosphoserine: serine 219, serine 227, and serine 233.

It belongs to the ribose-phosphate pyrophosphokinase family. As to quaternary structure, binds to PRPS1 and PRPS2.

Functionally, seems to play a negative regulatory role in 5-phosphoribose 1-diphosphate synthesis. The chain is Phosphoribosyl pyrophosphate synthase-associated protein 2 (Prpsap2) from Mus musculus (Mouse).